Here is a 466-residue protein sequence, read N- to C-terminus: Eukaryotic translation initiation factor 3 subunit M (466 aa).

The interval 40–62 (EISPLLEPLRQQEQSDAEPDRKQ) is disordered. Residues 211-378 (AQTHILQALQ…SEFLVHRATY (168 aa)) form the PCI domain. Residues 424–466 (AAEEAAQGKSNDKGNKSGDRRQRHGNNQQSQQQQQPQEVAAAE) form a disordered region. The segment covering 433 to 443 (SNDKGNKSGDR) has biased composition (basic and acidic residues). The span at 451 to 460 (QQSQQQQQPQ) shows a compositional bias: low complexity.

The protein belongs to the eIF-3 subunit M family. In terms of assembly, component of the eukaryotic translation initiation factor 3 (eIF-3) complex.

Its subcellular location is the cytoplasm. Functionally, component of the eukaryotic translation initiation factor 3 (eIF-3) complex, which is involved in protein synthesis of a specialized repertoire of mRNAs and, together with other initiation factors, stimulates binding of mRNA and methionyl-tRNAi to the 40S ribosome. The eIF-3 complex specifically targets and initiates translation of a subset of mRNAs involved in cell proliferation. This is Eukaryotic translation initiation factor 3 subunit M from Aspergillus oryzae (strain ATCC 42149 / RIB 40) (Yellow koji mold).